Here is a 325-residue protein sequence, read N- to C-terminus: Peroxidase 45 (325 aa).

The first 25 residues, 1–25 (MEKNTSQTIFSNFFLLLLLSSCVSA), serve as a signal peptide directing secretion. 4 cysteine pairs are disulfide-bonded: C36/C115, C69/C74, C121/C321, and C200/C232. The active-site Proton acceptor is H67. Ca(2+) is bound by residues D68, V71, G73, D75, and S77. Residue P163 coordinates substrate. Heme b is bound at residue H193. Residue T194 coordinates Ca(2+). Positions 245, 248, and 253 each coordinate Ca(2+).

It belongs to the peroxidase family. Classical plant (class III) peroxidase subfamily. Heme b serves as cofactor. Requires Ca(2+) as cofactor. Slightly expressed in roots.

Its subcellular location is the secreted. The catalysed reaction is 2 a phenolic donor + H2O2 = 2 a phenolic radical donor + 2 H2O. Removal of H(2)O(2), oxidation of toxic reductants, biosynthesis and degradation of lignin, suberization, auxin catabolism, response to environmental stresses such as wounding, pathogen attack and oxidative stress. These functions might be dependent on each isozyme/isoform in each plant tissue. The chain is Peroxidase 45 (PER45) from Arabidopsis thaliana (Mouse-ear cress).